Consider the following 239-residue polypeptide: Tumor protein p53-inducible nuclear protein 1 (239 aa).

The LIR motif lies at 25-37; that stretch reads EKEDDEWILVDFI.

In terms of assembly, interacts with p53/TP53 and HIPK2. Interacts with PRKCG, GABARAP, GABARAPL1, GABARAPL2, MAP1LC3A, MAP1LC3B and MAP1LC3C. As to expression, specifically expressed by acinar cells of chronic pancreatitis tissue.

It is found in the cytoplasm. The protein resides in the cytosol. The protein localises to the nucleus. It localises to the PML body. Its subcellular location is the cytoplasmic vesicle. It is found in the autophagosome. Antiproliferative and proapoptotic protein involved in cell stress response which acts as a dual regulator of transcription and autophagy. Acts as a positive regulator of autophagy. In response to cellular stress or activation of autophagy, relocates to autophagosomes where it interacts with autophagosome-associated proteins GABARAP, GABARAPL1/L2, MAP1LC3A/B/C and regulates autophagy. Acts as an antioxidant and plays a major role in p53/TP53-driven oxidative stress response. Possesses both a p53/TP53-independent intracellular reactive oxygen species (ROS) regulatory function and a p53/TP53-dependent transcription regulatory function. Positively regulates p53/TP53 and p73/TP73 and stimulates their capacity to induce apoptosis and regulate cell cycle. In response to double-strand DNA breaks, promotes p53/TP53 phosphorylation on 'Ser-46' and subsequent apoptosis. Acts as a tumor suppressor by inducing cell death by an autophagy and caspase-dependent mechanism. Can reduce cell migration by regulating the expression of SPARC. The chain is Tumor protein p53-inducible nuclear protein 1 (Trp53inp1) from Rattus norvegicus (Rat).